The following is a 458-amino-acid chain: MGSEPPSSPQVVEEGADEEDEELSGAEDADLRSSSGRGSLLTRRGITLRVLLKDGLVEPGDGVLSIHYLGKKFVGDLLNDGKIRWVETGQIFNSPSAWATHCKRLVNPAKKSGCGWASVRYRGQKLVQYKTTWLHKYQPSADMSLISEGEDDEMGDDDEEEGKTTIPVEDKNKKSKPELHEIGLTQRRDRERIPVRYCTLGTRDAARDPHTLVELSAFSAINRFQPFNVAVSSNVLLLMDFHCHLTSSEVVGYLGGRWDTNTQLLTVLRAFPCRTRLADKDAAPAVEEEICQNLFMRGLSLVGWYHSHPRGPALPSLQDIDSQMDHQLRLQGSSNGFQPCLGIICGPYYHGNQGVASTITPFWVVPPPEQRPNDHGIPVAVEVTYVQDNFLTTDVLNEMMLLVEFYRSAPDLVQFSQMWSPNTSILDKIKASLSGHAPKDQAYAQILEHVYNQLRNTQ.

The interval 1–37 (MGSEPPSSPQVVEEGADEEDEELSGAEDADLRSSSGR) is disordered. A compositionally biased stretch (acidic residues) spans 14-28 (EGADEEDEELSGAED). Positions 42–137 (TRRGITLRVL…QYKTTWLHKY (96 aa)) constitute an RAMA domain. Residues Ser94, Ser96, and Trp116 each contribute to the DNA site. The interval 147-175 (SEGEDDEMGDDDEEEGKTTIPVEDKNKKS) is disordered. The span at 148-161 (EGEDDEMGDDDEEE) shows a compositional bias: acidic residues. In terms of domain architecture, MPN spans 229 to 364 (VAVSSNVLLL…VASTITPFWV (136 aa)). Residues His306, His308, and Asp319 each coordinate Zn(2+). Residues 306–319 (HSHPRGPALPSLQD) carry the JAMM motif motif.

It belongs to the peptidase M67 family. Degraded following binding to N(6)-methyladenosine methylated DNA (m6A).

Functionally, probable protease. Acts as a sensor of N(6)-methyladenosine methylation on DNA (m6A): recognizes and binds m6A DNA, leading to its degradation. Binds only double strand DNA (dsDNA) in a sequence-independent manner. In Danio rerio (Zebrafish), this protein is MPN domain-containing protein.